The primary structure comprises 360 residues: Peptide chain release factor 1 (360 aa).

Glutamine 237 carries the post-translational modification N5-methylglutamine.

Belongs to the prokaryotic/mitochondrial release factor family. Methylated by PrmC. Methylation increases the termination efficiency of RF1.

The protein localises to the cytoplasm. Functionally, peptide chain release factor 1 directs the termination of translation in response to the peptide chain termination codons UAG and UAA. The protein is Peptide chain release factor 1 of Pseudomonas putida (strain W619).